A 738-amino-acid polypeptide reads, in one-letter code: Exocyst complex component 3 (738 aa).

Residues 28–91 (LEKVEQYRHR…DEVERLLRGV (64 aa)) adopt a coiled-coil conformation.

It belongs to the SEC6 family. In terms of assembly, the exocyst complex is composed of Sec3/Exoc1, Sec5/Exoc2, Sec6/Exoc3, Sec8/Exoc4, Sec10/Exoc5, Sec15/Exoc6, Exo70/Exoc7 and Exo84/Exoc8.

Component of the exocyst complex involved in the docking of exocytic vesicles with fusion sites on the plasma membrane. The polypeptide is Exocyst complex component 3 (Drosophila melanogaster (Fruit fly)).